Reading from the N-terminus, the 207-residue chain is Outer-membrane lipoprotein LolB (207 aa).

Residues 1–21 form the signal peptide; that stretch reads MPLPDFRFIRLLPLAALVLTA. C22 carries the N-palmitoyl cysteine lipid modification. The S-diacylglycerol cysteine moiety is linked to residue C22.

It belongs to the LolB family. As to quaternary structure, monomer.

Its subcellular location is the cell outer membrane. Its function is as follows. Plays a critical role in the incorporation of lipoproteins in the outer membrane after they are released by the LolA protein. The chain is Outer-membrane lipoprotein LolB from Escherichia coli O6:H1 (strain CFT073 / ATCC 700928 / UPEC).